The following is a 132-amino-acid chain: Small ribosomal subunit protein uS11c (132 aa).

The protein belongs to the universal ribosomal protein uS11 family. In terms of assembly, part of the 30S ribosomal subunit.

The protein localises to the plastid. Its subcellular location is the chloroplast. This Gnetum parvifolium (Small-leaved jointfir) protein is Small ribosomal subunit protein uS11c.